A 302-amino-acid chain; its full sequence is N(G),N(G)-dimethylarginine dimethylaminohydrolase (302 aa).

Aspartate 102, arginine 127, and arginine 172 together coordinate substrate. Catalysis depends on histidine 201, which acts as the Proton donor. The active-site Nucleophile is the cysteine 295.

This sequence belongs to the DDAH family.

It catalyses the reaction N(omega),N(omega)-dimethyl-L-arginine + H2O = dimethylamine + L-citrulline. It carries out the reaction N(omega)-methyl-L-arginine + H2O = L-citrulline + methylamine. Its function is as follows. Hydrolyzes N(G),N(G)-dimethyl-L-arginine (ADMA) and N(G)-monomethyl-L-arginine (MMA). The protein is N(G),N(G)-dimethylarginine dimethylaminohydrolase of Mycobacterium tuberculosis (strain ATCC 25618 / H37Rv).